A 357-amino-acid polypeptide reads, in one-letter code: 3'-hydroxy-N-methyl-(S)-coclaurine 4'-O-methyltransferase 2 (357 aa).

Asp226 provides a ligand contact to S-adenosyl-L-methionine. His264 (proton acceptor) is an active-site residue.

This sequence belongs to the class I-like SAM-binding methyltransferase superfamily. Cation-independent O-methyltransferase family. COMT subfamily. As to quaternary structure, homodimer. Expressed in roots, stems, leaves and flowers.

It catalyses the reaction (S)-3'-hydroxy-N-methylcoclaurine + S-adenosyl-L-methionine = (S)-reticuline + S-adenosyl-L-homocysteine + H(+). It functions in the pathway alkaloid biosynthesis; (S)-reticuline biosynthesis; (S)-reticuline from (S)-norcoclaurine: step 4/4. In terms of biological role, involved in the biosynthesis of benzylisoquinoline alkaloids. Catalyzes the transfer of the methyl group to the 4'-hydroxyl group of 3'-hydroxy-N-methylcoclaurine to form reticuline. Can also use laudanosoline and, with a lower activity, 6-O-methylnorlaudanosoline and norlaudanosoline as substrates. Also involved in the papaverine biosynthesis. This chain is 3'-hydroxy-N-methyl-(S)-coclaurine 4'-O-methyltransferase 2, found in Papaver somniferum (Opium poppy).